The primary structure comprises 287 residues: Ribosomal RNA small subunit methyltransferase A (287 aa).

S-adenosyl-L-methionine is bound by residues N35, V37, G62, E83, D113, and N131.

It belongs to the class I-like SAM-binding methyltransferase superfamily. rRNA adenine N(6)-methyltransferase family. RsmA subfamily.

It localises to the cytoplasm. It catalyses the reaction adenosine(1518)/adenosine(1519) in 16S rRNA + 4 S-adenosyl-L-methionine = N(6)-dimethyladenosine(1518)/N(6)-dimethyladenosine(1519) in 16S rRNA + 4 S-adenosyl-L-homocysteine + 4 H(+). Specifically dimethylates two adjacent adenosines (A1518 and A1519) in the loop of a conserved hairpin near the 3'-end of 16S rRNA in the 30S particle. May play a critical role in biogenesis of 30S subunits. In Thermobifida fusca (strain YX), this protein is Ribosomal RNA small subunit methyltransferase A.